The sequence spans 534 residues: Unguisins hydrolase ungD' (534 aa).

It belongs to the peptidase S12 family.

The protein operates within secondary metabolite biosynthesis. Its function is as follows. Hydrolase; part of the gene cluster that mediates the biosynthesis of the unguisins, gamma-aminobutyric acid (GABA)-containing fungal cyclic heptapeptides with the amino acid sequence cyclo-(D-Ala1-D-Val2-L-Leu3-beta-MePhe4-D-Ala5-D-Trp6-GABA7) for unguisin H and cyclo-(D-Ala1-D-Ala2-L-Leu3-beta-MePhe4-D-Ala5-D-Trp6-GABA7) for unguisin I. Within the pathway, the hydrolase ungD' catalyzes the hydrolysis between the D-tryptophan and GABA residues of unguisins H and I to produce the corresponding linear peptides. The alanine racemase ungC' catalyzes the interconversion of L-alanine and D-alanine, providing the D-alanine which is accepted by the first adenylation domain of the nonribosomal peptide synthetase (NRPS) ungA', whereas the methyltransferase ungE' provides the (2R,3R)-beta-methylphenylalanine residue incorporated by the module 4. UngA' is the main enzyme within the cluster which condenses the 7 residues using its respective 7 modules. The terminal condensation domain (Ct) is involved in cyclization with D-alanine and thereby releasing of unguisins H and I. In Aspergillus campestris (strain IBT 28561), this protein is Unguisins hydrolase ungD'.